The chain runs to 351 residues: Glycerol-3-phosphate dehydrogenase 1-like protein (351 aa).

12–17 (GSGNWG) contacts NAD(+). Residue Lys122 participates in substrate binding. Ala155 is an NAD(+) binding site. The Proton acceptor role is filled by Lys206. 3 residues coordinate NAD(+): Arg271, Lys298, and Gln300. 271–272 (RN) is a binding site for substrate.

Belongs to the NAD-dependent glycerol-3-phosphate dehydrogenase family. As to quaternary structure, interacts with SCN5A.

Its subcellular location is the cytoplasm. The enzyme catalyses sn-glycerol 3-phosphate + NAD(+) = dihydroxyacetone phosphate + NADH + H(+). Functionally, plays a role in regulating cardiac sodium current; decreased enzymatic activity with resulting increased levels of glycerol 3-phosphate activating the DPD1L-dependent SCN5A phosphorylation pathway, may ultimately lead to decreased sodium current; cardiac sodium current may also be reduced due to alterations of NAD(H) balance induced by DPD1L. This is Glycerol-3-phosphate dehydrogenase 1-like protein (Gpd1l) from Mus musculus (Mouse).